The sequence spans 83 residues: Small ribosomal subunit protein eS21 (83 aa).

It belongs to the eukaryotic ribosomal protein eS21 family. Component of the 40S small ribosomal subunit. Interacts with sta.

It is found in the cytoplasm. Its subcellular location is the cytosol. The protein resides in the rough endoplasmic reticulum. May be an associated component of the ribosome rather than a core structural subunit. May act as a translation initiation factor. Has a role in regulation of cell proliferation in the hematopoietic organs and the imaginal disks of larva. In Drosophila ananassae (Fruit fly), this protein is Small ribosomal subunit protein eS21 (RpS21).